We begin with the raw amino-acid sequence, 130 residues long: Small ribosomal subunit protein uS9 (130 aa).

The interval 105–130 (TRDARMKERKKPGLKKARKASQFSKR) is disordered. Over residues 111-130 (KERKKPGLKKARKASQFSKR) the composition is skewed to basic residues.

It belongs to the universal ribosomal protein uS9 family.

The sequence is that of Small ribosomal subunit protein uS9 from Lactiplantibacillus plantarum (strain ATCC BAA-793 / NCIMB 8826 / WCFS1) (Lactobacillus plantarum).